The sequence spans 170 residues: Glycine cleavage system H protein, mitochondrial (170 aa).

The N-terminal 47 residues, 1 to 47, are a transit peptide targeting the mitochondrion; it reads MLRTTRLWTTRMPTVSKLFLRNSSGNALNKNKLPFLYSSQGPQAVRY. One can recognise a Lipoyl-binding domain in the interval 61–143; it reads TAFVGITKYA…MGDGWLVKMK (83 aa). K102 carries the N6-lipoyllysine modification.

Belongs to the GcvH family. Component of the glycine decarboxylase complex (GDC), which is composed of four proteins: P, T, L and H. Requires (R)-lipoate as cofactor.

It localises to the mitochondrion. In terms of biological role, the glycine cleavage system (glycine decarboxylase complex) catalyzes the degradation of glycine. The H protein shuttles the methylamine group of glycine from the P protein to the T protein. This chain is Glycine cleavage system H protein, mitochondrial (GCV3), found in Saccharomyces cerevisiae (strain ATCC 204508 / S288c) (Baker's yeast).